The sequence spans 486 residues: mRNA cap guanine-N(7) methyltransferase (486 aa).

Residues 1-92 (MAGGADLDEP…ADRKAARERA (92 aa)) form a disordered region. Composition is skewed to basic and acidic residues over residues 9–28 (EPPRQSDSTTDRKRPADSTH), 35–54 (VPRDRAGNKTYDISKLEPAR), and 82–92 (EADRKAARERA). One can recognise an mRNA cap 0 methyltransferase domain in the interval 135–486 (SRIKGLRSFN…FYVGFCFYKV (352 aa)). Position 144 to 145 (144 to 145 (NN)) interacts with mRNA. S-adenosyl-L-methionine contacts are provided by residues Lys-148, Gly-177, Asp-201, Asp-247, 281–283 (MFC), and Tyr-286. Residues 333-351 (VEMKKKQAEAGDGSKKDDG) show a composition bias toward basic and acidic residues. The tract at residues 333–365 (VEMKKKQAEAGDGSKKDDGGDAEEGELDEPEVE) is disordered. The segment covering 352–363 (GDAEEGELDEPE) has biased composition (acidic residues).

Belongs to the class I-like SAM-binding methyltransferase superfamily. mRNA cap 0 methyltransferase family.

The protein resides in the nucleus. The enzyme catalyses a 5'-end (5'-triphosphoguanosine)-ribonucleoside in mRNA + S-adenosyl-L-methionine = a 5'-end (N(7)-methyl 5'-triphosphoguanosine)-ribonucleoside in mRNA + S-adenosyl-L-homocysteine. Functionally, responsible for methylating the 5'-cap structure of mRNAs. The chain is mRNA cap guanine-N(7) methyltransferase (ABD1) from Pyricularia oryzae (strain 70-15 / ATCC MYA-4617 / FGSC 8958) (Rice blast fungus).